Consider the following 665-residue polypeptide: FAD-dependent oxidoreductase domain-containing protein 2 (665 aa).

An N-terminal signal peptide occupies residues 1–17 (MGPSGLLVALALHLAVC). Asn136 carries N-linked (GlcNAc...) asparagine glycosylation. The tract at residues 642 to 665 (RWLGDHSTAPEPLTQSLDSNKEEL) is disordered. A Prevents secretion from ER motif is present at residues 662 to 665 (KEEL).

It belongs to the FOXRED2 family. As to quaternary structure, interacts with SEL1L. May interact with OS9 and DNAJC10. Interacts with TXNDC16. Requires FAD as cofactor. In terms of processing, N-glycosylated.

The protein resides in the endoplasmic reticulum lumen. Its function is as follows. Probable flavoprotein which may function in endoplasmic reticulum associated degradation (ERAD). May bind non-native proteins in the endoplasmic reticulum and target them to the ubiquitination machinery for subsequent degradation. The chain is FAD-dependent oxidoreductase domain-containing protein 2 from Mus musculus (Mouse).